We begin with the raw amino-acid sequence, 207 residues long: Ribosome maturation factor RimP (207 aa).

This sequence belongs to the RimP family.

Its subcellular location is the cytoplasm. In terms of biological role, required for maturation of 30S ribosomal subunits. The protein is Ribosome maturation factor RimP of Parvibaculum lavamentivorans (strain DS-1 / DSM 13023 / NCIMB 13966).